Here is a 163-residue protein sequence, read N- to C-terminus: Large ribosomal subunit protein bL21 (163 aa).

The interval 124–163 (KETTKKTKATVSIKKTAKKPSEKKSAPQKKAAVVSNNKED) is disordered.

It belongs to the bacterial ribosomal protein bL21 family. Part of the 50S ribosomal subunit. Contacts protein L20.

Functionally, this protein binds to 23S rRNA in the presence of protein L20. This Bartonella quintana (strain Toulouse) (Rochalimaea quintana) protein is Large ribosomal subunit protein bL21.